We begin with the raw amino-acid sequence, 156 residues long: Ribosomal RNA large subunit methyltransferase H (156 aa).

Residues leucine 73, glycine 104, and 123–128 (ISSMTL) each bind S-adenosyl-L-methionine.

The protein belongs to the RNA methyltransferase RlmH family. In terms of assembly, homodimer.

The protein resides in the cytoplasm. The catalysed reaction is pseudouridine(1915) in 23S rRNA + S-adenosyl-L-methionine = N(3)-methylpseudouridine(1915) in 23S rRNA + S-adenosyl-L-homocysteine + H(+). Specifically methylates the pseudouridine at position 1915 (m3Psi1915) in 23S rRNA. The sequence is that of Ribosomal RNA large subunit methyltransferase H from Burkholderia ambifaria (strain ATCC BAA-244 / DSM 16087 / CCUG 44356 / LMG 19182 / AMMD) (Burkholderia cepacia (strain AMMD)).